A 488-amino-acid polypeptide reads, in one-letter code: Solanidine UDP-glucose glucosyltransferase 1 (488 aa).

The active-site Proton acceptor is the histidine 23. An an anthocyanidin-binding site is contributed by histidine 23. The active-site Charge relay is the aspartate 127. Residues valine 352, glutamine 354, histidine 369, asparagine 373, serine 374, and glutamate 377 each contribute to the UDP-alpha-D-glucose site. Alanine 392 contacts an anthocyanidin. UDP-alpha-D-glucose-binding residues include aspartate 393 and glutamine 394.

This sequence belongs to the UDP-glycosyltransferase family. In terms of tissue distribution, expressed in the shoot apical meristem (SAM) and tuber.

The enzyme catalyses solasodine + UDP-alpha-D-glucose = solasodine 3-beta-D-glucoside + UDP + H(+). It carries out the reaction solanidine + UDP-alpha-D-glucose = solanidine 3-O-beta-D-glucopyranoside + UDP + H(+). It catalyses the reaction tomatidine + UDP-alpha-D-glucose = tomatidine 3-O-beta-D-glucopyranoside + UDP + H(+). Glucosyltransferase involved in the glucosylation of the steroidal alkaloid aglycons solanidine, solasodine and tomatidine to produce their corresponding glycoalkaloids. This Solanum tuberosum (Potato) protein is Solanidine UDP-glucose glucosyltransferase 1.